The primary structure comprises 63 residues: Beta-defensin 6 (63 aa).

A signal peptide spans 1–22 (MKIHYLLFAFILVMLSPLAAFS). Residue glutamine 23 is modified to Pyrrolidone carboxylic acid. 3 cysteine pairs are disulfide-bonded: cysteine 31-cysteine 59, cysteine 38-cysteine 52, and cysteine 42-cysteine 60.

This sequence belongs to the beta-defensin family. Predominantly expressed in skeletal muscle, also expressed in esophagus, tongue, and trachea. Also expressed in lung when induced by lipopolysaccharide.

The protein localises to the secreted. Has potent antibacterial activity against E.coli (ATCC 25922). This is Beta-defensin 6 (Defb6) from Mus musculus (Mouse).